The sequence spans 194 residues: Auxin-induced protein 22A (194 aa).

Residues 13-17 (LRLGL) carry the EAR-like (transcriptional repression) motif. The interval 40 to 62 (EIDDVGDENSSSGGGGDRKMENK) is disordered. One can recognise a PB1 domain in the interval 85-173 (KMYVKVSMDG…KRLRIMKRAD (89 aa)).

This sequence belongs to the Aux/IAA family. As to quaternary structure, homodimers and heterodimers.

It is found in the nucleus. In terms of biological role, aux/IAA proteins are short-lived transcriptional factors that function as repressors of early auxin response genes at low auxin concentrations. Repression is thought to result from the interaction with auxin response factors (ARFs), proteins that bind to the auxin-responsive promoter element (AuxRE). Formation of heterodimers with ARF proteins may alter their ability to modulate early auxin response genes expression. In Vigna radiata var. radiata (Mung bean), this protein is Auxin-induced protein 22A (AUX22A).